Reading from the N-terminus, the 359-residue chain is Fructose-1,6-bisphosphatase class 1 (359 aa).

4 residues coordinate Mg(2+): E95, D117, L119, and D120. Residues 120–123 (DGSS) and N212 contribute to the substrate site. E284 provides a ligand contact to Mg(2+).

It belongs to the FBPase class 1 family. As to quaternary structure, homotetramer. Requires Mg(2+) as cofactor.

It localises to the cytoplasm. The catalysed reaction is beta-D-fructose 1,6-bisphosphate + H2O = beta-D-fructose 6-phosphate + phosphate. It functions in the pathway carbohydrate biosynthesis; gluconeogenesis. The sequence is that of Fructose-1,6-bisphosphatase class 1 from Hydrogenophilus thermoluteolus (Pseudomonas hydrogenothermophila).